A 562-amino-acid chain; its full sequence is NAD-dependent malic enzyme (562 aa).

The Proton donor role is filled by Tyr101. Arg154 is a binding site for NAD(+). Residue Lys172 is the Proton acceptor of the active site. A divalent metal cation is bound by residues Glu243, Asp244, and Asp267. Residues Asp267 and Asn415 each coordinate NAD(+).

This sequence belongs to the malic enzymes family. As to quaternary structure, homotetramer. Mg(2+) serves as cofactor. Mn(2+) is required as a cofactor.

It carries out the reaction (S)-malate + NAD(+) = pyruvate + CO2 + NADH. It catalyses the reaction oxaloacetate + H(+) = pyruvate + CO2. The sequence is that of NAD-dependent malic enzyme from Shewanella sp. (strain MR-4).